The following is a 314-amino-acid chain: Mitochondrial thiamine pyrophosphate carrier 1 (314 aa).

Helical transmembrane passes span 14-30 (VAAW…GLLA), 84-100 (LLYV…YSLF), 116-136 (LVVG…FDVL), 170-186 (GSIA…SIMF), 217-233 (SAGT…TFPL), and 285-302 (GILV…VSFW). 3 Solcar repeats span residues 14 to 103 (VAAW…FNRY), 110 to 195 (EARL…IRIY), and 210 to 310 (ELAT…AIHY).

Belongs to the mitochondrial carrier (TC 2.A.29) family.

The protein resides in the mitochondrion inner membrane. Mitochondrial transporter that mediates uptake of thiamine pyrophosphate (ThPP) into mitochondria. The protein is Mitochondrial thiamine pyrophosphate carrier 1 (TPC1) of Saccharomyces cerevisiae (strain YJM789) (Baker's yeast).